A 385-amino-acid polypeptide reads, in one-letter code: GTPase Obg (385 aa).

Residues 1–159 (MHFIDQAEIE…RRLRLELKLI (159 aa)) enclose the Obg domain. The OBG-type G domain occupies 160-328 (AEVGIVGMPN…LLQRVWQCLG (169 aa)). GTP-binding positions include 166-173 (GMPNAGKS), 191-195 (FTTLQ), 213-216 (DIPG), 280-283 (NKID), and 309-311 (SAV). 2 residues coordinate Mg(2+): Ser-173 and Thr-193.

This sequence belongs to the TRAFAC class OBG-HflX-like GTPase superfamily. OBG GTPase family. Monomer. Mg(2+) serves as cofactor.

The protein localises to the cytoplasm. An essential GTPase which binds GTP, GDP and possibly (p)ppGpp with moderate affinity, with high nucleotide exchange rates and a fairly low GTP hydrolysis rate. Plays a role in control of the cell cycle, stress response, ribosome biogenesis and in those bacteria that undergo differentiation, in morphogenesis control. The chain is GTPase Obg from Synechococcus sp. (strain JA-3-3Ab) (Cyanobacteria bacterium Yellowstone A-Prime).